Reading from the N-terminus, the 310-residue chain is Pantothenate kinase (310 aa).

95 to 102 is a binding site for ATP; it reads GSVAVGKS.

This sequence belongs to the prokaryotic pantothenate kinase family.

The protein localises to the cytoplasm. It catalyses the reaction (R)-pantothenate + ATP = (R)-4'-phosphopantothenate + ADP + H(+). It participates in cofactor biosynthesis; coenzyme A biosynthesis; CoA from (R)-pantothenate: step 1/5. This chain is Pantothenate kinase, found in Mycobacteroides abscessus (strain ATCC 19977 / DSM 44196 / CCUG 20993 / CIP 104536 / JCM 13569 / NCTC 13031 / TMC 1543 / L948) (Mycobacterium abscessus).